We begin with the raw amino-acid sequence, 98 residues long: NADH-ubiquinone oxidoreductase chain 4L (98 aa).

The next 3 membrane-spanning stretches (helical) occupy residues 1 to 21 (MTLI…GLLM), 29 to 49 (ALLC…LTIL), and 61 to 81 (IILL…LVMV).

Belongs to the complex I subunit 4L family. In terms of assembly, core subunit of respiratory chain NADH dehydrogenase (Complex I) which is composed of 45 different subunits.

Its subcellular location is the mitochondrion inner membrane. It carries out the reaction a ubiquinone + NADH + 5 H(+)(in) = a ubiquinol + NAD(+) + 4 H(+)(out). Functionally, core subunit of the mitochondrial membrane respiratory chain NADH dehydrogenase (Complex I) which catalyzes electron transfer from NADH through the respiratory chain, using ubiquinone as an electron acceptor. Part of the enzyme membrane arm which is embedded in the lipid bilayer and involved in proton translocation. This is NADH-ubiquinone oxidoreductase chain 4L (MT-ND4L) from Balaenoptera omurai (Omura's baleen whale).